Here is a 203-residue protein sequence, read N- to C-terminus: MSRYTGPSWKQARRLGLSLTGTGKELARRNYVPGQHGPNNRSKLSEYGLQLAEKQKLRFSYGLGEKQFRNLFVQATKIKQGTLGFNFMLLLERRLDNVVYRLGLATTRRQARQFVNHGHILVDGKRVDIPSYRVEVGQVISVREKSIKVPAILEAVEATLGRPAFVSFDAEKLEGSLTRLPERDEINPEINEALVVEFYNKML.

The S4 RNA-binding domain maps to Arg-93 to Val-156.

Belongs to the universal ribosomal protein uS4 family. Part of the 30S ribosomal subunit. Contacts protein S5. The interaction surface between S4 and S5 is involved in control of translational fidelity.

Functionally, one of the primary rRNA binding proteins, it binds directly to 16S rRNA where it nucleates assembly of the body of the 30S subunit. With S5 and S12 plays an important role in translational accuracy. The chain is Small ribosomal subunit protein uS4 from Streptococcus suis (strain 98HAH33).